Here is a 253-residue protein sequence, read N- to C-terminus: Succinate dehydrogenase [ubiquinone] iron-sulfur subunit, mitochondrial (253 aa).

Residues 23–114 (FKIYRWNPDK…TTKIYPLPHM (92 aa)) form the 2Fe-2S ferredoxin-type domain. 4 residues coordinate [2Fe-2S] cluster: Cys-74, Cys-79, Cys-82, and Cys-94. One can recognise a 4Fe-4S ferredoxin-type domain in the interval 156-186 (DRKKLDGLYECILCACCSTSCPSYWWNQEEY). Residues Cys-166, Cys-169, and Cys-172 each coordinate [4Fe-4S] cluster. A [3Fe-4S] cluster-binding site is contributed by Cys-176. Trp-181 contacts a ubiquinone. [3Fe-4S] cluster is bound by residues Cys-223 and Cys-229. Cys-233 is a binding site for [4Fe-4S] cluster.

This sequence belongs to the succinate dehydrogenase/fumarate reductase iron-sulfur protein family. In terms of assembly, component of complex II composed of four subunits: a flavoprotein (FP), an iron-sulfur protein (IP), and a cytochrome b composed of a large and a small subunit. Requires [2Fe-2S] cluster as cofactor. [3Fe-4S] cluster is required as a cofactor. It depends on [4Fe-4S] cluster as a cofactor.

It is found in the mitochondrion inner membrane. The enzyme catalyses a quinone + succinate = fumarate + a quinol. The protein operates within carbohydrate metabolism; tricarboxylic acid cycle; fumarate from succinate (eukaryal route): step 1/1. Iron-sulfur protein (IP) subunit of succinate dehydrogenase (SDH) that is involved in complex II of the mitochondrial electron transport chain and is responsible for transferring electrons from succinate to ubiquinone (coenzyme Q). The protein is Succinate dehydrogenase [ubiquinone] iron-sulfur subunit, mitochondrial (SDH2) of Candida glabrata (strain ATCC 2001 / BCRC 20586 / JCM 3761 / NBRC 0622 / NRRL Y-65 / CBS 138) (Yeast).